We begin with the raw amino-acid sequence, 163 residues long: EF-hand calcium-binding domain-containing protein 11 (163 aa).

EF-hand domains lie at 18-53 (SEHR…LFGY), 91-126 (RYRN…VAPK), and 127-162 (LPER…GQKE). Ca(2+) is bound by residues Asp140, Asp142, Asp144, His146, and Asp151.

This Homo sapiens (Human) protein is EF-hand calcium-binding domain-containing protein 11 (EFCAB11).